Reading from the N-terminus, the 216-residue chain is Glycerol-3-phosphate acyltransferase (216 aa).

The next 6 membrane-spanning stretches (helical) occupy residues 3–23 (FPIF…YWIA), 48–68 (IGWK…MLPV), 82–102 (FQLL…FLGF), 112–132 (FGVF…VFWV), 142–162 (LGSI…TILL), and 166–186 (EVSY…ILTH).

It belongs to the PlsY family. In terms of assembly, probably interacts with PlsX.

The protein resides in the cell inner membrane. It catalyses the reaction an acyl phosphate + sn-glycerol 3-phosphate = a 1-acyl-sn-glycero-3-phosphate + phosphate. Its pathway is lipid metabolism; phospholipid metabolism. In terms of biological role, catalyzes the transfer of an acyl group from acyl-phosphate (acyl-PO(4)) to glycerol-3-phosphate (G3P) to form lysophosphatidic acid (LPA). This enzyme utilizes acyl-phosphate as fatty acyl donor, but not acyl-CoA or acyl-ACP. The sequence is that of Glycerol-3-phosphate acyltransferase from Leptospira interrogans serogroup Icterohaemorrhagiae serovar Lai (strain 56601).